A 272-amino-acid chain; its full sequence is MLTIFAISDSIAETAHQVTLAVAAQFKEKIKIRRVPYIKTIDDVDCIFPEIAKIERKIIISTIITVDVREYLTKKCYEKNIYIMNVLGPLIDSISSMLNTNPEYKPGAMRQIDEIYYKRIEAMEFAMQYDDSKDYGGLKNADVVLIGLSRTSKTPLSMYLANKGVKAINIPLMPEIGVPDEIYTIDKKKIFGLKIDAFQLIEIRKKRLDKFHRISSSIEYAGDERILEELEYSDRIMKRLGCKTIDITQRAIEDTALIILESIGYNKNTNIY.

147–154 (GLSRTSKT) is a binding site for ADP.

Belongs to the pyruvate, phosphate/water dikinase regulatory protein family. PDRP subfamily.

It catalyses the reaction N(tele)-phospho-L-histidyl/L-threonyl-[pyruvate, phosphate dikinase] + ADP = N(tele)-phospho-L-histidyl/O-phospho-L-threonyl-[pyruvate, phosphate dikinase] + AMP + H(+). The catalysed reaction is N(tele)-phospho-L-histidyl/O-phospho-L-threonyl-[pyruvate, phosphate dikinase] + phosphate + H(+) = N(tele)-phospho-L-histidyl/L-threonyl-[pyruvate, phosphate dikinase] + diphosphate. Bifunctional serine/threonine kinase and phosphorylase involved in the regulation of the pyruvate, phosphate dikinase (PPDK) by catalyzing its phosphorylation/dephosphorylation. This Clostridium botulinum (strain Alaska E43 / Type E3) protein is Putative pyruvate, phosphate dikinase regulatory protein.